The sequence spans 448 residues: Argininosuccinate synthase (448 aa).

Residues 17–25 and A43 each bind ATP; that span reads AFSGGLDTS. L-citrulline is bound at residue Y99. ATP contacts are provided by G129 and T131. Residues T131, N135, and D136 each coordinate L-aspartate. N135 serves as a coordination point for L-citrulline. D136 is a binding site for ATP. L-citrulline contacts are provided by R139 and S192. Residue D194 participates in ATP binding. L-citrulline-binding residues include T201, E203, and E280.

The protein belongs to the argininosuccinate synthase family. Type 2 subfamily. Homotetramer.

The protein resides in the cytoplasm. The catalysed reaction is L-citrulline + L-aspartate + ATP = 2-(N(omega)-L-arginino)succinate + AMP + diphosphate + H(+). The protein operates within amino-acid biosynthesis; L-arginine biosynthesis; L-arginine from L-ornithine and carbamoyl phosphate: step 2/3. The sequence is that of Argininosuccinate synthase from Bradyrhizobium sp. (strain ORS 278).